Consider the following 102-residue polypeptide: Glutaredoxin 1 (102 aa).

The region spanning Met-1–Lys-96 is the Glutaredoxin domain. Cysteines 17 and 20 form a disulfide.

It belongs to the glutaredoxin family. Monomer.

Its subcellular location is the cytoplasm. In terms of biological role, has a glutathione-disulfide oxidoreductase activity in the presence of NADPH and glutathione reductase. Reduces low molecular weight disulfides and proteins. The polypeptide is Glutaredoxin 1 (grxC1) (Rickettsia felis (strain ATCC VR-1525 / URRWXCal2) (Rickettsia azadi)).